A 580-amino-acid chain; its full sequence is PTS system fructose-specific EIIB'BC component (580 aa).

PTS EIIB type-2 domains follow at residues 1-99 (MSSS…QLAA) and 120-215 (IVAI…KALA). Cys-126 acts as the Phosphocysteine intermediate; for EIIB activity in catalysis. Cys-126 bears the Phosphocysteine; by EIIA mark. A PTS EIIC type-2 domain is found at 243–580 (AYKHLMTGVS…LKKPVADVIA (338 aa)). Transmembrane regions (helical) follow at residues 254 to 274 (MLPFVTAGGLLIALAFALGGI), 289 to 309 (LFQIGAKAGFTLMVPALAGYI), 332 to 352 (LNAGFLGGIIAGFIAGYGVAA), 369 to 389 (VLILPVLGTLLVGLAMMYVFG), 410 to 430 (SALLLGLLLGGMMAFDMGGPV), 451 to 471 (AAAMVAGMTPPLGIALATWVF), 483 to 503 (ATAAGVLGLAFVTEGAIPYAA), 509 to 529 (TIPALVIGSAVAGAISMTAGA), and 549 to 571 (HLLNYVLALVVGVVVTAVALRLL).

It localises to the cell inner membrane. The enzyme catalyses D-fructose(out) + N(pros)-phospho-L-histidyl-[protein] = D-fructose 1-phosphate(in) + L-histidyl-[protein]. The phosphoenolpyruvate-dependent sugar phosphotransferase system (sugar PTS), a major carbohydrate active transport system, catalyzes the phosphorylation of incoming sugar substrates concomitantly with their translocation across the cell membrane. The enzyme II FruAB PTS system is involved in fructose transport. In Xanthomonas campestris pv. campestris (strain ATCC 33913 / DSM 3586 / NCPPB 528 / LMG 568 / P 25), this protein is PTS system fructose-specific EIIB'BC component.